The chain runs to 268 residues: Tryptophan synthase alpha chain (268 aa).

Active-site proton acceptor residues include E49 and D60.

It belongs to the TrpA family. Tetramer of two alpha and two beta chains.

It catalyses the reaction (1S,2R)-1-C-(indol-3-yl)glycerol 3-phosphate + L-serine = D-glyceraldehyde 3-phosphate + L-tryptophan + H2O. Its pathway is amino-acid biosynthesis; L-tryptophan biosynthesis; L-tryptophan from chorismate: step 5/5. Functionally, the alpha subunit is responsible for the aldol cleavage of indoleglycerol phosphate to indole and glyceraldehyde 3-phosphate. In Haemophilus influenzae (strain 86-028NP), this protein is Tryptophan synthase alpha chain.